We begin with the raw amino-acid sequence, 130 residues long: Large ribosomal subunit protein bL20 (130 aa).

This sequence belongs to the bacterial ribosomal protein bL20 family.

Functionally, binds directly to 23S ribosomal RNA and is necessary for the in vitro assembly process of the 50S ribosomal subunit. It is not involved in the protein synthesizing functions of that subunit. The polypeptide is Large ribosomal subunit protein bL20 (Salinispora tropica (strain ATCC BAA-916 / DSM 44818 / JCM 13857 / NBRC 105044 / CNB-440)).